A 274-amino-acid chain; its full sequence is Ommochrome-binding protein (274 aa).

A signal peptide spans 1 to 18; that stretch reads MKLLILTICALHVNQMMA. A glycan (N-linked (GlcNAc...) asparagine) is linked at N183.

As to quaternary structure, monomer. Present in larval hemolymph and synthesized by the fat body.

Binds to an ommochrome, ommatin D which is a yellow chromophore. May be involved in guiding the chromophore through the hemolymph from the epidermis to the gut. The chain is Ommochrome-binding protein from Manduca sexta (Tobacco hawkmoth).